Reading from the N-terminus, the 763-residue chain is Phosphoglycerol transferase I (763 aa).

The next 4 membrane-spanning stretches (helical) occupy residues 1–21 (MSEL…AWKA), 26–46 (WWFA…ITLY), 77–97 (ILPG…LGWI), and 108–128 (VGYS…SPAF).

Belongs to the OpgB family.

Its subcellular location is the cell inner membrane. The catalysed reaction is a phosphatidylglycerol + a membrane-derived-oligosaccharide D-glucose = a 1,2-diacyl-sn-glycerol + a membrane-derived-oligosaccharide 6-(glycerophospho)-D-glucose.. It functions in the pathway glycan metabolism; osmoregulated periplasmic glucan (OPG) biosynthesis. In terms of biological role, transfers a phosphoglycerol residue from phosphatidylglycerol to the membrane-bound nascent glucan backbones. This chain is Phosphoglycerol transferase I, found in Salmonella agona (strain SL483).